A 246-amino-acid polypeptide reads, in one-letter code: 3-deoxy-manno-octulosonate cytidylyltransferase (246 aa).

This sequence belongs to the KdsB family.

The protein resides in the cytoplasm. The catalysed reaction is 3-deoxy-alpha-D-manno-oct-2-ulosonate + CTP = CMP-3-deoxy-beta-D-manno-octulosonate + diphosphate. It participates in nucleotide-sugar biosynthesis; CMP-3-deoxy-D-manno-octulosonate biosynthesis; CMP-3-deoxy-D-manno-octulosonate from 3-deoxy-D-manno-octulosonate and CTP: step 1/1. The protein operates within bacterial outer membrane biogenesis; lipopolysaccharide biosynthesis. Activates KDO (a required 8-carbon sugar) for incorporation into bacterial lipopolysaccharide in Gram-negative bacteria. The sequence is that of 3-deoxy-manno-octulosonate cytidylyltransferase from Chloroherpeton thalassium (strain ATCC 35110 / GB-78).